The sequence spans 361 residues: Glycerophosphodiester phosphodiesterase GDPD1, chloroplastic (361 aa).

The transit peptide at 1–53 (MSLKAIHVSEVPSLDHFPENPSLICSSRKANNKFVVVGHRGHGMNMSQSPDLR) directs the protein to the chloroplast. Positions 54-323 (FSALKENSIL…DHVEEITEAV (270 aa)) constitute a GP-PDE domain.

Belongs to the glycerophosphoryl diester phosphodiesterase family. Mg(2+) is required as a cofactor. Expressed in roots, shoots, rosette leaves, stems, flowers and siliques.

The protein localises to the plastid. It is found in the chloroplast. The enzyme catalyses a sn-glycero-3-phosphodiester + H2O = an alcohol + sn-glycerol 3-phosphate + H(+). Its function is as follows. Hydrolyzes glycerolphosphoglycerol, glycerophosphocholine and glycerophosphoethanolamine in vitro. May be involved in release of inorganic phosphate (Pi) from phospholipids during Pi starvation. This Arabidopsis thaliana (Mouse-ear cress) protein is Glycerophosphodiester phosphodiesterase GDPD1, chloroplastic.